Here is a 397-residue protein sequence, read N- to C-terminus: Fractalkine (397 aa).

The N-terminal stretch at 1–24 is a signal peptide; it reads MAPISLSWLLRLATFCHLTVLLAG. The tract at residues 25–100 is chemokine and involved in interaction with ITGAV:ITGB3 and ITGA4:ITGB1; the sequence is QHHGVTKCNI…RQAAALTRNG (76 aa). Residues 25-341 lie on the Extracellular side of the membrane; the sequence is QHHGVTKCNI…PDAQAATRRQ (317 aa). Cystine bridges form between cysteine 32/cysteine 58 and cysteine 36/cysteine 74. N-linked (GlcNAc...) asparagine glycosylation occurs at asparagine 33. Positions 101-341 are mucin-like stalk; that stretch reads GTFEKQIGEV…PDAQAATRRQ (241 aa). Disordered regions lie at residues 128 to 265 and 289 to 309; these read EPEA…REEM and VPVS…SWTP. Positions 133-147 are enriched in polar residues; it reads GESSSLEPTPSSQEA. O-linked (GalNAc...) threonine glycosylation occurs at threonine 183. The span at 193 to 202 shows a compositional bias: polar residues; sequence TAATWQSSAP. Over residues 219–243 the composition is skewed to low complexity; sequence PSTQDPSTQASTASSPAPEENAPSE. An O-linked (GalNAc...) serine glycan is attached at serine 253. O-linked (GalNAc...) threonine glycosylation is present at threonine 329. The chain crosses the membrane as a helical span at residues 342 to 362; it reads AVGLLAFLGLLFCLGVAMFTY. The Cytoplasmic portion of the chain corresponds to 363 to 397; that stretch reads QSLQGCPRKMAGEMAEGLRYIPRSCGSNSYVLVPV.

It belongs to the intercrine delta family. As to quaternary structure, monomer. Forms a ternary complex with CX3CR1 and ITGAV:ITGB3 or ITGA4:ITGB1. (Microbial infection) Interacts with pox virus crmD; this inhibits cell migration mediated by CX3CL1. In terms of assembly, (Microbial infection) Interacts (via N-terminus) with human cytomegalovirus (HHV-5) US28. As to quaternary structure, (Microbial infection) Interacts with P.falciparum (strain 3D7) CBP1 and CBP2 (via their extracellular domains); the interaction mediates the adhesion of infected erythrocytes with endothelial cells. In terms of processing, a soluble short 95 kDa form may be released by proteolytic cleavage from the long membrane-anchored form. O-glycosylated with core 1 or possibly core 8 glycans. In terms of tissue distribution, expressed in the seminal plasma, endometrial fluid and follicular fluid (at protein level). Small intestine, colon, testis, prostate, heart, brain, lung, skeletal muscle, kidney and pancreas. Most abundant in the brain and heart.

The protein resides in the cell membrane. It localises to the secreted. Functionally, chemokine that acts as a ligand for both CX3CR1 and integrins ITGAV:ITGB3 and ITGA4:ITGB1. The CX3CR1-CX3CL1 signaling exerts distinct functions in different tissue compartments, such as immune response, inflammation, cell adhesion and chemotaxis. Regulates leukocyte adhesion and migration processes at the endothelium. Can activate integrins in both a CX3CR1-dependent and CX3CR1-independent manner. In the presence of CX3CR1, activates integrins by binding to the classical ligand-binding site (site 1) in integrins. In the absence of CX3CR1, binds to a second site (site 2) in integrins which is distinct from site 1 and enhances the binding of other integrin ligands to site 1. The soluble form is chemotactic for T-cells and monocytes, but not for neutrophils. In terms of biological role, the membrane-bound form promotes adhesion of those leukocytes to endothelial cells. Its function is as follows. (Microbial infection) Mediates the cytoadherence of erythrocytes infected with parasite P.falciparum (strain 3D7) with endothelial cells by interacting with P.falciparum CBP1 and CBP2 expressed at the surface of erythrocytes. The adhesion prevents the elimination of infected erythrocytes by the spleen. The polypeptide is Fractalkine (Homo sapiens (Human)).